Consider the following 239-residue polypeptide: Ribonuclease PH (239 aa).

Phosphate-binding positions include R86 and 124 to 126; that span reads GTR.

This sequence belongs to the RNase PH family. In terms of assembly, homohexameric ring arranged as a trimer of dimers.

The enzyme catalyses tRNA(n+1) + phosphate = tRNA(n) + a ribonucleoside 5'-diphosphate. In terms of biological role, phosphorolytic 3'-5' exoribonuclease that plays an important role in tRNA 3'-end maturation. Removes nucleotide residues following the 3'-CCA terminus of tRNAs; can also add nucleotides to the ends of RNA molecules by using nucleoside diphosphates as substrates, but this may not be physiologically important. Probably plays a role in initiation of 16S rRNA degradation (leading to ribosome degradation) during starvation. The polypeptide is Ribonuclease PH (Cupriavidus taiwanensis (strain DSM 17343 / BCRC 17206 / CCUG 44338 / CIP 107171 / LMG 19424 / R1) (Ralstonia taiwanensis (strain LMG 19424))).